A 559-amino-acid polypeptide reads, in one-letter code: Poly(U)-binding-splicing factor PUF60 (559 aa).

Residues 1–516 (MATATIALQV…EDAEIIVKIF (516 aa)) form an inhibits homodimerization region. Glycyl lysine isopeptide (Lys-Gly) (interchain with G-Cter in SUMO2) cross-links involve residues Gln-14 and Lys-43. Thr-60 carries the phosphothreonine modification. The inhibits transcriptional repression, interaction with ERCC3 and apoptosis induction stretch occupies residues 77 to 559 (QSIKSVLVKQ…ERFDNSDLSA (483 aa)). Lys-80 participates in a covalent cross-link: Glycyl lysine isopeptide (Lys-Gly) (interchain with G-Cter in SUMO2). Phosphoserine is present on Ser-112. 2 RRM domains span residues 129–207 (CRVY…RPSN) and 226–304 (NRIY…KAVT). Residue Ser-244 is modified to Phosphoserine. Lys-251 is modified (N6-acetyllysine). Thr-314 bears the Phosphothreonine mark. Positions 416–437 (KKEKEEEELFPESERPEMLSEQ) are disordered. Lys-419 participates in a covalent cross-link: Glycyl lysine isopeptide (Lys-Gly) (interchain with G-Cter in SUMO2). Basic and acidic residues predominate over residues 427–437 (ESERPEMLSEQ). Lys-454 carries the post-translational modification N6-acetyllysine. Lys-458 participates in a covalent cross-link: Glycyl lysine isopeptide (Lys-Gly) (interchain with G-Cter in SUMO2). Residues 462-549 (TVMVLRNMVD…RKVVAEVYDQ (88 aa)) enclose the RRM 3; atypical domain.

Belongs to the RRM half pint family. As to quaternary structure, homodimer. Associates with the spliceosome. Found in a complex with RO60 and Y5 RNA. Found in a complex with FUBP1 and far upstream element (FUSE) DNA segment. Interacts directly with ERCC3. Interacts with CDK7 and GTF2H1. Interacts with SRSF11/P54. Does not interact with ERCC3 in xeroderma pigmentosum complementation group B (XPB) cells. Interacts with ARGLU1; interaction may be involved in ARGLU1-mediated modulation of alternative splicing. In terms of tissue distribution, isoform 2 is expressed in colonic epithelium and colorectal epithelium cancer (at protein level). Isoform 6 is expressed in colorectal epithelial cancer but below detection level in colonic epithelium. Expressed in heart, brain, placenta, lung, liver, skeletal muscle, kidney, pancreas, spleen, thymus, prostate, testis, ovary, small intestine, colon and peripheral blood leukocytes.

The protein resides in the nucleus. DNA- and RNA-binding protein, involved in several nuclear processes such as pre-mRNA splicing, apoptosis and transcription regulation. In association with FUBP1 regulates MYC transcription at the P2 promoter through the core-TFIIH basal transcription factor. Acts as a transcriptional repressor through the core-TFIIH basal transcription factor. Represses FUBP1-induced transcriptional activation but not basal transcription. Decreases ERCC3 helicase activity. Does not repress TFIIH-mediated transcription in xeroderma pigmentosum complementation group B (XPB) cells. Is also involved in pre-mRNA splicing. Promotes splicing of an intron with weak 3'-splice site and pyrimidine tract in a cooperative manner with U2AF2. Involved in apoptosis induction when overexpressed in HeLa cells. Isoform 6 failed to repress MYC transcription and inhibited FIR-induced apoptosis in colorectal cancer. Isoform 6 may contribute to tumor progression by enabling increased MYC expression and greater resistance to apoptosis in tumors than in normal cells. Modulates alternative splicing of several mRNAs. Binds to relaxed DNA of active promoter regions. Binds to the pyrimidine tract and 3'-splice site regions of pre-mRNA; binding is enhanced in presence of U2AF2. Binds to Y5 RNA in association with RO60. Binds to poly(U) RNA. The polypeptide is Poly(U)-binding-splicing factor PUF60 (Homo sapiens (Human)).